The following is a 140-amino-acid chain: Large ribosomal subunit protein uL13 (140 aa).

This sequence belongs to the universal ribosomal protein uL13 family. In terms of assembly, part of the 50S ribosomal subunit.

This protein is one of the early assembly proteins of the 50S ribosomal subunit, although it is not seen to bind rRNA by itself. It is important during the early stages of 50S assembly. In Nautilia profundicola (strain ATCC BAA-1463 / DSM 18972 / AmH), this protein is Large ribosomal subunit protein uL13.